The sequence spans 327 residues: AASGLEAAMKAAGKQYFGTALTVRNDQGEIDIINNKNEIGSITPENAMKWEAIQPNRGQFNWGPADQHAAAATSRGYELRCHTLVWHSQLPSWVANGNWNNQTLQAVMRDHINAVMGRYRGKCTHWDVVNEALNEDGTYRDSVFLRVIGEAYIPIAFRMALAADPTTKLYYNDYNLEYGNAKTEGAKRIARLVKSYGLRIDGIGLQAHMTSESTPTQNTPTPSRAKLASVLQGLADLGVDVAYTELDIRMNTPATQQKLQTNADAYARIVGSCMDVKRCVGITVWGISDKYSWVPGTFPGEGSALLWNDNFQKKPSYTSTLNTINRR.

The 323-residue stretch at 1-323 (AASGLEAAMK…KPSYTSTLNT (323 aa)) folds into the GH10 domain. A disulfide bond links cysteine 81 and cysteine 123. Residue asparagine 101 is glycosylated (N-linked (GlcNAc...) asparagine). The Proton donor role is filled by glutamate 131. Catalysis depends on glutamate 245, which acts as the Nucleophile. Residues cysteine 273 and cysteine 279 are joined by a disulfide bond.

This sequence belongs to the glycosyl hydrolase 10 (cellulase F) family. As to quaternary structure, monomer.

The protein resides in the secreted. The protein localises to the extracellular space. It carries out the reaction Endohydrolysis of (1-&gt;4)-beta-D-xylosidic linkages in xylans.. It functions in the pathway glycan degradation; xylan degradation. Functionally, catalyzes the hydrolysis of the internal glycosidic bonds in heteroxylans, releasing mainly xylobiose and xylotriose. Most active on oat-spelt xylan. The sequence is that of Endo-1,4-beta-xylanase A from Fusarium oxysporum f. sp. lycopersici (strain 4287 / CBS 123668 / FGSC 9935 / NRRL 34936) (Fusarium vascular wilt of tomato).